The chain runs to 305 residues: Protein MFI (305 aa).

In terms of assembly, can homodimerize. Interacts with MFF; the interaction inhibits MFF interaction with DNM1L.

Its subcellular location is the cytoplasm. The protein resides in the cytosol. The protein localises to the mitochondrion outer membrane. Its function is as follows. Acts as an inhibitor of mitochondrial fission. Interacts with MFF and prevents DNM1L recruitment to mitochondria, promoting a more fused mitochondrial network. The chain is Protein MFI from Rattus norvegicus (Rat).